We begin with the raw amino-acid sequence, 356 residues long: MSSTHLPGGNQALLGCSATELESWAVAEGQPAFRGRQLHDWLYAKGARSFDAITVLPKSWRISLQQRGLTIGRLLEVNRAVAVDDTTKLLLATVDGETIESVGIPTQQRLTVCLSSQVGCPMACRFCASGKGGLQRSLATHEIVDQVLSLREAMDRRPSHVVFMGMGEPLLNIEAVLASIRCLNIDLGIAQRRITVSTVGVPHTLPQLAELAMKRLGRAQFTLAVSLHAPNQELRERLIPTACAYPFETLLQDCRHYLAVTGRRVTFEYILLGALNDQPQHAEELAERVRGFQSHVNLIAYNPIDDEGFQRPNPETIEAFRRVLEQRGVAVSLRASRGLDQNAACGQLRRQHAAIG.

The active-site Proton acceptor is the Glu-100. A Radical SAM core domain is found at 106–340 (TQQRLTVCLS…VSLRASRGLD (235 aa)). Cysteines 113 and 345 form a disulfide. Residues Cys-120, Cys-124, and Cys-127 each coordinate [4Fe-4S] cluster. Residues 167 to 168 (GE), Ser-197, 226 to 228 (SLH), and Asn-302 contribute to the S-adenosyl-L-methionine site. Cys-345 functions as the S-methylcysteine intermediate in the catalytic mechanism.

It belongs to the radical SAM superfamily. RlmN family. The cofactor is [4Fe-4S] cluster.

It localises to the cytoplasm. The catalysed reaction is adenosine(2503) in 23S rRNA + 2 reduced [2Fe-2S]-[ferredoxin] + 2 S-adenosyl-L-methionine = 2-methyladenosine(2503) in 23S rRNA + 5'-deoxyadenosine + L-methionine + 2 oxidized [2Fe-2S]-[ferredoxin] + S-adenosyl-L-homocysteine. The enzyme catalyses adenosine(37) in tRNA + 2 reduced [2Fe-2S]-[ferredoxin] + 2 S-adenosyl-L-methionine = 2-methyladenosine(37) in tRNA + 5'-deoxyadenosine + L-methionine + 2 oxidized [2Fe-2S]-[ferredoxin] + S-adenosyl-L-homocysteine. Its function is as follows. Specifically methylates position 2 of adenine 2503 in 23S rRNA and position 2 of adenine 37 in tRNAs. This chain is Probable dual-specificity RNA methyltransferase RlmN, found in Prochlorococcus marinus (strain MIT 9303).